A 144-amino-acid chain; its full sequence is Large ribosomal subunit protein uL15 (144 aa).

The segment at Met-1–Phe-50 is disordered. Residues Arg-21 to Phe-50 show a composition bias toward gly residues.

It belongs to the universal ribosomal protein uL15 family. In terms of assembly, part of the 50S ribosomal subunit.

In terms of biological role, binds to the 23S rRNA. This is Large ribosomal subunit protein uL15 from Tolumonas auensis (strain DSM 9187 / NBRC 110442 / TA 4).